The following is a 41-amino-acid chain: Pi-stichotoxin-Hcr5c (41 aa).

3 cysteine pairs are disulfide-bonded: C4/C37, C6/C30, and C20/C38.

This sequence belongs to the sea anemone type 3 (BDS) potassium channel toxin family.

The protein localises to the secreted. The protein resides in the nematocyst. Functionally, weakly and reversibly inhibits rat homomeric ASIC1 (isoform ASIC1a) (IC(50)=4.95 uM), and ASIC3 (IC(50)=17 uM). ASIC1a current inhibition and ASIC3 transient current inhibition are not complete, and reach a maximum of 70% inhibition and 80%, respectively. This Radianthus crispa (Leathery sea anemone) protein is Pi-stichotoxin-Hcr5c.